The sequence spans 191 residues: MKYIQTEQQIEIPEGVTVSIKSRIVKVVGPRGTLTKNLKHIDVTFTKVNNQLIKVAVHNGDRKHVAALRTVKSLVDNMITGVTKGYKYKMRYVYAHFPINVNIVEKDGAKFIEVRNFLGDKKIRNVPVRDGVTIEFSTNVKDEIVLSGNSVEDVSQNAADLQQICRVRNKDIRKFLDGIYVSHKGFIVEDM.

This sequence belongs to the universal ribosomal protein uL6 family. In terms of assembly, component of the large ribosomal subunit (LSU). Mature yeast ribosomes consist of a small (40S) and a large (60S) subunit. The 40S small subunit contains 1 molecule of ribosomal RNA (18S rRNA) and 33 different proteins (encoded by 57 genes). The large 60S subunit contains 3 rRNA molecules (25S, 5.8S and 5S rRNA) and 46 different proteins (encoded by 81 genes).

The protein localises to the cytoplasm. Functionally, component of the ribosome, a large ribonucleoprotein complex responsible for the synthesis of proteins in the cell. The small ribosomal subunit (SSU) binds messenger RNAs (mRNAs) and translates the encoded message by selecting cognate aminoacyl-transfer RNA (tRNA) molecules. The large subunit (LSU) contains the ribosomal catalytic site termed the peptidyl transferase center (PTC), which catalyzes the formation of peptide bonds, thereby polymerizing the amino acids delivered by tRNAs into a polypeptide chain. The nascent polypeptides leave the ribosome through a tunnel in the LSU and interact with protein factors that function in enzymatic processing, targeting, and the membrane insertion of nascent chains at the exit of the ribosomal tunnel. The protein is Large ribosomal subunit protein uL6B of Saccharomyces cerevisiae (strain ATCC 204508 / S288c) (Baker's yeast).